The following is a 416-amino-acid chain: Polyadenylation and cleavage factor homolog 1 (416 aa).

The segment covering 1 to 17 has biased composition (polar residues); the sequence is MASNGSFSAQRNANART. A disordered region spans residues 1-80; that stretch reads MASNGSFSAQ…NNNNVSRVSS (80 aa). The span at 70–80 shows a compositional bias: low complexity; sequence SNNNNVSRVSS. Positions 199–220 form a coiled coil; that stretch reads KELTDLLSLLNNEKEKKTLEAS. The segment at 254 to 276 adopts a C2H2-type zinc-finger fold; sequence RQCSSCGLRFKCQEEHSKHMDWH.

As to quaternary structure, forms a complex with cleavage and polyadenylation specificity factor (CPSF) subunits CLPS3, CLPS5, CPSF30, PCFS4, PCFS5, CSTF77 and FIPS3.

Its subcellular location is the nucleus. This Arabidopsis thaliana (Mouse-ear cress) protein is Polyadenylation and cleavage factor homolog 1.